We begin with the raw amino-acid sequence, 325 residues long: Protein SAR DEFICIENT 4 (325 aa).

A chloroplast-targeting transit peptide spans 1–42 (MAALPVFIPAESFPSILSHETLINHFRTNLPKHSSTITSPVR).

Belongs to the ornithine cyclodeaminase/mu-crystallin family.

It localises to the plastid. The protein localises to the chloroplast. Functionally, involved in the biosynthesis of pipecolate (Pip), a metabolite that orchestrates defense amplification, positive regulation of salicylic acid (SA) biosynthesis, and priming to guarantee effective local resistance induction and the establishment of systemic acquired resistance (SAR). Converts delta-(1)-piperideine-2-carboxylate (P2C) to Pip. Mediates reduction of P2C and biosynthesis of Pip in systemic tissue and contributes to SAR establishment. Does not possess ornithine cyclodeaminase activity in vitro. This chain is Protein SAR DEFICIENT 4, found in Arabidopsis thaliana (Mouse-ear cress).